A 294-amino-acid chain; its full sequence is Nucleotide-binding protein LCA_0526 (294 aa).

Residue G12–T19 participates in ATP binding. A GTP-binding site is contributed by D62–S65.

The protein belongs to the RapZ-like family.

In terms of biological role, displays ATPase and GTPase activities. In Latilactobacillus sakei subsp. sakei (strain 23K) (Lactobacillus sakei subsp. sakei), this protein is Nucleotide-binding protein LCA_0526.